A 258-amino-acid polypeptide reads, in one-letter code: Thrombin-like enzyme saxthrombin (258 aa).

A signal peptide spans 1-18 (MVLIRVLANLLILQLSYA). Residues 19–24 (QKSSEL) constitute a propeptide that is removed on maturation. The region spanning 25–249 (VIGGDECNIN…YNHWIQSIIA (225 aa)) is the Peptidase S1 domain. Cystine bridges form between Cys31/Cys163, Cys50/Cys66, Cys98/Cys256, Cys142/Cys210, Cys174/Cys189, and Cys200/Cys225. Asn44 is a glycosylation site (N-linked (GlcNAc...) asparagine). Catalysis depends on charge relay system residues His65 and Asp110. The active-site Charge relay system is the Ser204. An N-linked (GlcNAc...) asparagine glycan is attached at Asn251.

This sequence belongs to the peptidase S1 family. Snake venom subfamily. As to quaternary structure, monomer. In terms of tissue distribution, expressed by the venom gland.

It is found in the secreted. Thrombin-like snake venom serine protease that shows strong blood coagulation activity in vitro. The sequence is that of Thrombin-like enzyme saxthrombin from Gloydius intermedius (Central Asian pit viper).